The chain runs to 99 residues: RNA-binding protein Hfq (99 aa).

Residues aspartate 9–valine 68 form the Sm domain. Residues serine 67 to glutamate 99 are disordered. Residues asparagine 72–glutamate 99 show a composition bias toward low complexity.

The protein belongs to the Hfq family. In terms of assembly, homohexamer.

Functionally, RNA chaperone that binds small regulatory RNA (sRNAs) and mRNAs to facilitate mRNA translational regulation in response to envelope stress, environmental stress and changes in metabolite concentrations. Also binds with high specificity to tRNAs. This is RNA-binding protein Hfq from Actinobacillus succinogenes (strain ATCC 55618 / DSM 22257 / CCUG 43843 / 130Z).